A 123-amino-acid polypeptide reads, in one-letter code: Putative membrane protein insertion efficiency factor (123 aa).

The protein belongs to the UPF0161 family.

The protein resides in the cell inner membrane. Functionally, could be involved in insertion of integral membrane proteins into the membrane. In Beijerinckia indica subsp. indica (strain ATCC 9039 / DSM 1715 / NCIMB 8712), this protein is Putative membrane protein insertion efficiency factor.